Here is a 61-residue protein sequence, read N- to C-terminus: Small ribosomal subunit protein uS14 (61 aa).

Positions 24, 27, 40, and 43 each coordinate Zn(2+).

It belongs to the universal ribosomal protein uS14 family. Zinc-binding uS14 subfamily. Part of the 30S ribosomal subunit. Contacts proteins S3 and S10. Zn(2+) is required as a cofactor.

In terms of biological role, binds 16S rRNA, required for the assembly of 30S particles and may also be responsible for determining the conformation of the 16S rRNA at the A site. This is Small ribosomal subunit protein uS14 from Mycoplasma genitalium (strain ATCC 33530 / DSM 19775 / NCTC 10195 / G37) (Mycoplasmoides genitalium).